Consider the following 551-residue polypeptide: Putative transport protein HI_0035 (551 aa).

The next 5 membrane-spanning stretches (helical) occupy residues 4–24, 28–48, 65–85, 95–115, and 157–177; these read IAIT…IGHW, GVGL…HFTN, FGLI…FFSS, AFAI…HKIA, and VSYA…MWLI. 2 consecutive RCK C-terminal domains span residues 191-275 and 277-360; these read RFNA…IIGH and VDAP…VIGN. 6 helical membrane passes run 370–390, 402–424, 438–458, 463–483, 492–512, and 529–549; these read MLPV…PFYI, AGGP…LYWF, IVLF…DTLV, LEWM…VGTI, YLTI…LAFA, and VYPL…VLLW.

This sequence belongs to the AAE transporter (TC 2.A.81) family. YidE subfamily.

It localises to the cell membrane. This chain is Putative transport protein HI_0035, found in Haemophilus influenzae (strain ATCC 51907 / DSM 11121 / KW20 / Rd).